Here is a 283-residue protein sequence, read N- to C-terminus: uncharacterized protein (283 aa).

Residues 1–21 (MKLKLKFLLISLLGSSLLLSA) form the signal peptide. Cys-22 carries the N-palmitoyl cysteine lipid modification. Cys-22 carries the S-diacylglycerol cysteine lipid modification.

Belongs to the MG439/MG440 family.

It is found in the cell membrane. This is an uncharacterized protein from Mycoplasma pneumoniae (strain ATCC 29342 / M129 / Subtype 1) (Mycoplasmoides pneumoniae).